The chain runs to 199 residues: N-(5'-phosphoribosyl)anthranilate isomerase (199 aa).

This sequence belongs to the TrpF family.

The enzyme catalyses N-(5-phospho-beta-D-ribosyl)anthranilate = 1-(2-carboxyphenylamino)-1-deoxy-D-ribulose 5-phosphate. It participates in amino-acid biosynthesis; L-tryptophan biosynthesis; L-tryptophan from chorismate: step 3/5. The chain is N-(5'-phosphoribosyl)anthranilate isomerase from Streptococcus pneumoniae (strain Hungary19A-6).